The sequence spans 318 residues: Olfactory receptor 2A2 (318 aa).

Over 1–24 the chain is Extracellular; sequence MEGNQTWITDITLLGFQVGPALAI. A glycan (N-linked (GlcNAc...) asparagine) is linked at Asn4. A helical transmembrane segment spans residues 25–48; the sequence is LLCGLFSVFYTLTLLGNGVIFGII. At 49–56 the chain is on the cytoplasmic side; the sequence is CLDSKLHT. Residues 57–78 traverse the membrane as a helical segment; it reads PMYFFLSHLAIIDMSYASNNVP. The Extracellular segment spans residues 79-99; it reads KMLANLMNQKRTISFVPCIMQ. Residues 100 to 119 traverse the membrane as a helical segment; the sequence is TFLYLAFAVTECLILVVMSY. The Cytoplasmic segment spans residues 120-138; the sequence is DRYVAICHPFQYTVIMSWR. The helical transmembrane segment at 139-157 threads the bilayer; it reads VCTILVLTSWSCGFALSLV. Over 158 to 194 the chain is Extracellular; sequence HEILLLRLPFCGPRDVNHLFCEILSVLKLACADTWVN. A helical transmembrane segment spans residues 195 to 218; it reads QVVIFATCVFVLVGPLSLILVSYM. At 219-235 the chain is on the cytoplasmic side; that stretch reads HILGAILKIQTKEGRIK. A helical membrane pass occupies residues 236 to 258; sequence AFSTCSSHLCVVGLFFGIAMVVY. Over 259–271 the chain is Extracellular; that stretch reads MVPDSNQREEQEK. A helical transmembrane segment spans residues 272–291; it reads MLSLFHSVFNPMLNPLIYSL. Residues 292 to 310 are Cytoplasmic-facing; that stretch reads RNAQLKGALHRALQRKRSM.

Belongs to the G-protein coupled receptor 1 family.

The protein localises to the cell membrane. Its function is as follows. Odorant receptor. The protein is Olfactory receptor 2A2 (OR2A2) of Homo sapiens (Human).